A 131-amino-acid chain; its full sequence is Large ribosomal subunit protein bL19 (131 aa).

Positions 1-11 are enriched in polar residues; the sequence is MEETMNNQEAP. The interval 1–20 is disordered; sequence MEETMNNQEAPETSEEETVA.

This sequence belongs to the bacterial ribosomal protein bL19 family.

In terms of biological role, this protein is located at the 30S-50S ribosomal subunit interface and may play a role in the structure and function of the aminoacyl-tRNA binding site. In Dehalococcoides mccartyi (strain ATCC BAA-2100 / JCM 16839 / KCTC 5957 / BAV1), this protein is Large ribosomal subunit protein bL19.